Consider the following 713-residue polypeptide: NAD(+) hydrolase SARM1 (713 aa).

An ARM 1 repeat occupies 53 to 96; the sequence is DVQAVLDGSLPALRSAIRTLRSSKDTGDLEETRRAIAETFQLVE. Residues W99, R106, 145 to 153, and 186 to 189 each bind NAD(+); these read EQILVSENR and HMFK. ARM repeat units lie at residues 110-149, 151-189, 192-231, 233-276, 277-310, 311-350, and 355-398; these read EEIC…QILV, ENRD…HMFK, EETS…NCAM, GGHR…LAAN, REME…NMLD, SADS…VETS, and QRNT…EEVP. SAM domains follow at residues 408–472 and 478–537; these read WKSG…LKTY and CDPN…ILSA. Positions 552–695 constitute a TIR domain; it reads KGPDVFISYR…KILRFLEGCP (144 aa). NAD(+) is bound by residues 561–562 and E591; that span reads RR. E634 is an active-site residue.

This sequence belongs to the SARM1 family. As to quaternary structure, homooctamer; forms an octameric ring via SAM domains.

It localises to the cytoplasm. The protein localises to the cell projection. It is found in the axon. Its subcellular location is the dendrite. The protein resides in the synapse. It localises to the mitochondrion. It catalyses the reaction NAD(+) + H2O = ADP-D-ribose + nicotinamide + H(+). It carries out the reaction NAD(+) = cyclic ADP-beta-D-ribose + nicotinamide + H(+). The catalysed reaction is NADP(+) + H2O = ADP-D-ribose 2'-phosphate + nicotinamide + H(+). Its activity is regulated as follows. Autoinhibited: in the inactive state, the enzymatic TIR domain is held apart by the autoinhibiting ARM repeats. NAD(+)-binding to ARM repeats maintains an inactive state by promoting interaction between ARM repeats and the TIR domain, thereby facilitating inhibition of the enzymatic TIR domain. Following activation, possibly by nicotinamide mononucleotide (NMN), auto-inhibitory interactions are released, allowing self-association of the TIR domains and subsequent activation of the NAD(+) hydrolase (NADase) activity. Self-association of TIR domains is facilitated by the octamer of SAM domains. NAD(+) hydrolase, which plays a key role in axonal degeneration following injury by regulating NAD(+) metabolism. Acts as a negative regulator of MYD88- and TRIF-dependent toll-like receptor signaling pathway by promoting Wallerian degeneration, an injury-induced form of programmed subcellular death which involves degeneration of an axon distal to the injury site. Wallerian degeneration is triggerred by NAD(+) depletion: in response to injury, SARM1 is activated and catalyzes cleavage of NAD(+) into ADP-D-ribose (ADPR), cyclic ADPR (cADPR) and nicotinamide; NAD(+) cleavage promoting cytoskeletal degradation and axon destruction. Also able to hydrolyze NADP(+), but not other NAD(+)-related molecules. Can activate neuronal cell death in response to stress. The polypeptide is NAD(+) hydrolase SARM1 (Danio rerio (Zebrafish)).